The primary structure comprises 294 residues: MNKINRVAIVGGTHGNEFTGAFLVKKFQQFPEVIQKPSFETLTILGNPKAFEAGKRYIEKDLNRCFLTESLQNTNLSSYEDIRAKQIAGVLGAENKPNVDVVIDLHSTTANMGLSIILGNQDPFLLKLCAYLSDINPLVKVCYTIPEKGSNFLRSLNKLGFVIEVGAVAQGVLNAELFQKTEQLIYTILDYLEQYNRGNIPKINNLLALYKFTGTVDYPRNENGDIQGMIHPDIQFRDYEPLNPGDPLFLTLDGKAIAYEGTSTVYPIFINEAAYYEKGIAMLFTEKQLINPSS.

Residues histidine 14 and glutamate 17 each contribute to the Zn(2+) site. Substrate contacts are provided by residues arginine 56 and 63–64 (NR). Histidine 106 lines the Zn(2+) pocket. Substrate is bound by residues glutamate 164 and tyrosine 275.

Belongs to the AspA/AstE family. Aspartoacylase subfamily. Zn(2+) is required as a cofactor.

It catalyses the reaction an N-acyl-L-aspartate + H2O = a carboxylate + L-aspartate. The chain is Probable aspartoacylase from Nostoc sp. (strain PCC 7120 / SAG 25.82 / UTEX 2576).